The primary structure comprises 486 residues: Homoserine O-acetyltransferase (486 aa).

An AB hydrolase-1 domain is found at 66–436; the sequence is NVLVICHALT…PEGHDAFLLE (371 aa). The active-site Nucleophile is Ser-162. The tract at residues 248–281 is disordered; sequence KFSRRSPSIAQQQKAQREETRKPSTVSEHSLQIH. Polar residues-rich tracts occupy residues 250-261 and 270-280; these read SRRSPSIAQQQK and PSTVSEHSLQI. Catalysis depends on residues Asp-401 and His-430.

Belongs to the AB hydrolase superfamily. MetX family.

The protein resides in the cytoplasm. The enzyme catalyses L-homoserine + acetyl-CoA = O-acetyl-L-homoserine + CoA. It functions in the pathway amino-acid biosynthesis; L-methionine biosynthesis via de novo pathway; O-acetyl-L-homoserine from L-homoserine: step 1/1. In terms of biological role, commits homoserine to the methionine biosynthesis pathway by catalyzing its O-acetylation. This chain is Homoserine O-acetyltransferase (MET2), found in Saccharomyces cerevisiae (strain ATCC 204508 / S288c) (Baker's yeast).